The sequence spans 202 residues: ATP-dependent Clp protease proteolytic subunit 1 (202 aa).

Catalysis depends on serine 99, which acts as the Nucleophile. Residue histidine 123 is part of the active site.

Belongs to the peptidase S14 family. As to quaternary structure, fourteen ClpP subunits assemble into 2 heptameric rings which stack back to back to give a disk-like structure with a central cavity, resembling the structure of eukaryotic proteasomes.

Its subcellular location is the cytoplasm. It carries out the reaction Hydrolysis of proteins to small peptides in the presence of ATP and magnesium. alpha-casein is the usual test substrate. In the absence of ATP, only oligopeptides shorter than five residues are hydrolyzed (such as succinyl-Leu-Tyr-|-NHMec, and Leu-Tyr-Leu-|-Tyr-Trp, in which cleavage of the -Tyr-|-Leu- and -Tyr-|-Trp bonds also occurs).. In terms of biological role, cleaves peptides in various proteins in a process that requires ATP hydrolysis. Has a chymotrypsin-like activity. Plays a major role in the degradation of misfolded proteins. The polypeptide is ATP-dependent Clp protease proteolytic subunit 1 (Symbiobacterium thermophilum (strain DSM 24528 / JCM 14929 / IAM 14863 / T)).